Consider the following 356-residue polypeptide: S-adenosylmethionine:tRNA ribosyltransferase-isomerase (356 aa).

This sequence belongs to the QueA family. As to quaternary structure, monomer.

The protein localises to the cytoplasm. It catalyses the reaction 7-aminomethyl-7-carbaguanosine(34) in tRNA + S-adenosyl-L-methionine = epoxyqueuosine(34) in tRNA + adenine + L-methionine + 2 H(+). Its pathway is tRNA modification; tRNA-queuosine biosynthesis. In terms of biological role, transfers and isomerizes the ribose moiety from AdoMet to the 7-aminomethyl group of 7-deazaguanine (preQ1-tRNA) to give epoxyqueuosine (oQ-tRNA). This chain is S-adenosylmethionine:tRNA ribosyltransferase-isomerase, found in Xanthomonas campestris pv. campestris (strain 8004).